The sequence spans 487 residues: UL37 immediate early glycoprotein (487 aa).

The signal sequence occupies residues 1 to 22 (MSPVYVNLLGSVGLLAFWYFSY). Residues 83–107 (GEESVTEDTEREDTEEEREDEEEEN) show a composition bias toward acidic residues. The interval 83-121 (GEESVTEDTEREDTEEEREDEEEENEARTPEVNPIDAEG) is disordered. N-linked (GlcNAc...) asparagine; by host glycosylation is found at Asn206, Asn210, Asn219, Asn223, Asn242, Asn246, Asn275, Asn281, Asn294, Asn297, Asn306, Asn333, Asn337, Asn343, Asn379, Asn384, and Asn391. The chain crosses the membrane as a helical span at residues 433–459 (WALLSICTVAAGSIALLSLFCILLIGL).

The protein belongs to the immediate early glycoprotein family. Interacts with host BAX. Interacts with host RSAD2/viperin; this interaction results in RSAD2/viperin relocalization from the endoplasmic reticulum to the mitochondria, actin cytoskeleton disruption and enhancement of infection. Interacts with host PEX19; this interaction inhibits the peroxisomal-dependent antiviral signaling. Interacts with host CHCHD6; this interaction rewires mitochondria by engaging the conserved MICOS complex.

The protein resides in the host endoplasmic reticulum membrane. It localises to the host Golgi apparatus membrane. It is found in the host mitochondrion membrane. The protein localises to the host peroxisome. Its function is as follows. Multifunctional transmembrane protein that plays several key roles in viral replication. Rapidely traffics from the host endoplasmic reticulum to the outer mitochondrial membrane where it acts to inhibit host immune response, block apoptotic signaling, regulate calcium flux, and induce mitochondrial fragmentation. Sequesters proapoptotic BAX at the outer mitochondrial membrane and prevents cytochrome c release and subsequent initiation of the proapoptotic cascade. Also provoques a calcium efflux from host endoplasmic reticulum and F-actin cytoskeleton disruption. Participates in the increase of host mitochondrial biogenesis, thus promoting viral replication by efficient use of newly made mitochondria. Additionally, a subset of vMIA localizes to peroxisomes, causing fragmentation and blocking peroxisomal MAVS signaling. Mechanistically, inhibits host MAVS oligomerization at peroxisomes in a mitochondrial fission factors (MFF)-dependent manner and in mitochondria independently of mitochondrial fission factors. Plays an essential role in the trafficking of host viperin/RSAD2 from the endoplasmic reticulum to the viral assembly compartment via the mitochondria during viral infection as failure of viperin to localize to the mitochondria results in insufficient lipogenesis and thus reduces viral replication. May play a role in escape from the host antiviral response. In Human cytomegalovirus (strain AD169) (HHV-5), this protein is UL37 immediate early glycoprotein (UL37).